The following is a 594-amino-acid chain: Pentatricopeptide repeat-containing protein At1g15480, mitochondrial (594 aa).

The N-terminal 67 residues, 1–67 (MFALSKVLRR…WSSSTGRRSL (67 aa)), are a transit peptide targeting the mitochondrion. The span at 62-75 (TGRRSLSSDAGAKT) shows a compositional bias: low complexity. Residues 62 to 109 (TGRRSLSSDAGAKTTGDDDDLEDKNVDLATPDETSSDSEDGEEFSGDE) are disordered. Acidic residues predominate over residues 95 to 109 (TSSDSEDGEEFSGDE). 7 PPR repeats span residues 226–260 (GELVYRTLLANHVATSNVRTAEAVFNKMKDLGFPL), 261–294 (STFTCNQMLILYKRVDKKKIADVLLLLEKENLKP), 295–329 (NLNTYKILIDTKGSSNDITGMEQIVETMKSEGVEL), 330–364 (DLRARALIARHYASAGLKEKAEKVLKEMEGESLEE), 432–466 (SSNVYSVLLRVYVDHKMVSEGKDLVKQMSDSGCNI), 467–502 (GALTWDAVIKLYVEAGEVEKAESSLSKAIQSKQIKP), and 503–537 (LMSSFMYLMHEYVRRGDVHNTEKIFQRMKQAGYQS).

Belongs to the PPR family. P subfamily.

The protein resides in the mitochondrion. This is Pentatricopeptide repeat-containing protein At1g15480, mitochondrial from Arabidopsis thaliana (Mouse-ear cress).